Reading from the N-terminus, the 610-residue chain is POU domain, class 6, transcription factor 1 (610 aa).

The interval 55–87 (SSAGAAESGGDEEGSGQSLEATEEAQLDGPVTT) is disordered. The POU-specific domain maps to 448–522 (EEAINLEEIR…VLERWLAEAE (75 aa)). The homeobox DNA-binding region spans 543–602 (KRKRRTSFTPQAIEVLNTYFEKNSLPTGQEITEIAKELNYDREVVRVWFCNRRQTLKNTS).

The protein belongs to the POU transcription factor family. Class-6 subfamily. As to expression, ubiquitously expressed during embryogenesis.

It is found in the nucleus. Its function is as follows. Transcription factor that binds with high affinity to the motif 5'-TAATGARAT-3'. The sequence is that of POU domain, class 6, transcription factor 1 (pou6f1) from Danio rerio (Zebrafish).